Consider the following 426-residue polypeptide: Bone morphogenetic protein 7 (426 aa).

The N-terminal stretch at 1 to 22 (MNALTVKRRLPVLLFLFHISLS) is a signal peptide. A propeptide spanning residues 23–282 (SISSNTILEN…TSDIHLRSVR (260 aa)) is cleaved from the precursor. N-linked (GlcNAc...) asparagine glycans are attached at residues Asn177, Asn307, and Asn367. Cystine bridges form between Cys325–Cys391, Cys354–Cys423, and Cys358–Cys425.

The protein belongs to the TGF-beta family. As to quaternary structure, homodimer; disulfide-linked. Interacts with twsg1.

The protein resides in the secreted. In terms of biological role, growth factor of the TGF-beta superfamily that plays important role in various biological processes, including embryogenesis, hematopoiesis, neurogenesis and skeletal morphogenesis. Initiates the canonical BMP signaling cascade by associating with type I receptor ACVR1 and type II receptor ACVR2A. Once all three components are bound together in a complex at the cell surface, ACVR2A phosphorylates and activates ACVR1. In turn, ACVR1 propagates signal by phosphorylating SMAD1/5/8 that travel to the nucleus and act as activators and repressors of transcription of target genes. This is Bone morphogenetic protein 7 (bmp7) from Xenopus laevis (African clawed frog).